The sequence spans 338 residues: tRNA N6-adenosine threonylcarbamoyltransferase (338 aa).

Residues H111 and H115 each contribute to the Fe cation site. Residues 134-138, D167, G180, and N272 contribute to the substrate site; that span reads LVSGG. D300 is a binding site for Fe cation.

It belongs to the KAE1 / TsaD family. Requires Fe(2+) as cofactor.

Its subcellular location is the cytoplasm. The catalysed reaction is L-threonylcarbamoyladenylate + adenosine(37) in tRNA = N(6)-L-threonylcarbamoyladenosine(37) in tRNA + AMP + H(+). Functionally, required for the formation of a threonylcarbamoyl group on adenosine at position 37 (t(6)A37) in tRNAs that read codons beginning with adenine. Is involved in the transfer of the threonylcarbamoyl moiety of threonylcarbamoyl-AMP (TC-AMP) to the N6 group of A37, together with TsaE and TsaB. TsaD likely plays a direct catalytic role in this reaction. The polypeptide is tRNA N6-adenosine threonylcarbamoyltransferase (Aliivibrio salmonicida (strain LFI1238) (Vibrio salmonicida (strain LFI1238))).